A 131-amino-acid chain; its full sequence is Small ribosomal subunit protein uS8 (131 aa).

It belongs to the universal ribosomal protein uS8 family. In terms of assembly, part of the 30S ribosomal subunit. Contacts proteins S5 and S12.

In terms of biological role, one of the primary rRNA binding proteins, it binds directly to 16S rRNA central domain where it helps coordinate assembly of the platform of the 30S subunit. The sequence is that of Small ribosomal subunit protein uS8 from Paraburkholderia xenovorans (strain LB400).